A 557-amino-acid polypeptide reads, in one-letter code: D-arabinono-1,4-lactone oxidase (557 aa).

An FAD-binding PCMH-type domain is found at 25 to 209; sequence FLCKPQAIFQ…THVTLRTCPK (185 aa). FAD is bound by residues 58–61, 62–63, 144–148, Ile-199, and 543–546; these read VGSG, HS, ISTGT, and LSGK. His-62 is subject to Pros-8alpha-FAD histidine.

This sequence belongs to the oxygen-dependent FAD-linked oxidoreductase family. Requires FAD as cofactor.

It catalyses the reaction D-arabinono-1,4-lactone + O2 = dehydro-D-arabinono-1,4-lactone + H2O2 + H(+). The catalysed reaction is L-galactono-1,4-lactone + O2 = L-ascorbate + H2O2 + H(+). It carries out the reaction L-gulono-1,4-lactone + O2 = L-ascorbate + H2O2 + H(+). The enzyme catalyses L-xylono-1,4-lactone + O2 = dehydro-L-arabinono-1,4-lactone + H2O2 + H(+). It participates in cofactor biosynthesis; D-erythroascorbate biosynthesis; dehydro-D-arabinono-1,4-lactone from D-arabinose: step 2/2. Functionally, D-arabinono-1,4-lactone oxidase that catalyzes the final step of biosynthesis of D-erythroascorbic acid, an important antioxidant and one of the virulence factors enhancing the pathogenicity. Is also able to oxidize L-galactono-1,4-lactone, L-xylono-1,4-lactone and L-gulono-1,4-lactone. The polypeptide is D-arabinono-1,4-lactone oxidase (Candida albicans (strain SC5314 / ATCC MYA-2876) (Yeast)).